We begin with the raw amino-acid sequence, 181 residues long: 6,7-dimethyl-8-ribityllumazine synthase (181 aa).

Residues Phe23, 61-63, and 85-87 contribute to the 5-amino-6-(D-ribitylamino)uracil site; these read SFE and AVI. 90 to 91 is a (2S)-2-hydroxy-3-oxobutyl phosphate binding site; that stretch reads QT. The Proton donor role is filled by His93. Phe118 is a 5-amino-6-(D-ribitylamino)uracil binding site. Position 132 (Arg132) interacts with (2S)-2-hydroxy-3-oxobutyl phosphate.

It belongs to the DMRL synthase family.

It carries out the reaction (2S)-2-hydroxy-3-oxobutyl phosphate + 5-amino-6-(D-ribitylamino)uracil = 6,7-dimethyl-8-(1-D-ribityl)lumazine + phosphate + 2 H2O + H(+). It participates in cofactor biosynthesis; riboflavin biosynthesis; riboflavin from 2-hydroxy-3-oxobutyl phosphate and 5-amino-6-(D-ribitylamino)uracil: step 1/2. Its function is as follows. Catalyzes the formation of 6,7-dimethyl-8-ribityllumazine by condensation of 5-amino-6-(D-ribitylamino)uracil with 3,4-dihydroxy-2-butanone 4-phosphate. This is the penultimate step in the biosynthesis of riboflavin. The polypeptide is 6,7-dimethyl-8-ribityllumazine synthase (Synechococcus elongatus (strain ATCC 33912 / PCC 7942 / FACHB-805) (Anacystis nidulans R2)).